The chain runs to 351 residues: MPSAPTWPALITTLIEGRHLSVSESTWAMRQVMRGEATPAQLGGLLVALRASGETVDEIVGFRDAVLEDALPLDADPRALDIVGTGGDPYGAVLNISSAASIVAASTGVPVIKHGNRGASSASGASDVLTALGIDLTIAPERVAAVLRETGITYAHAALFHPGFRHAAATRRELGISTLFNVLGPLCNPARPEASAVGVADLSRVPLMVGVFRTRGATALVYRGDDGIDKLTTTGHSHIWEVSRGAVTEHDLDPLELGIPRAPIEALLGEGVEENAEVIRRVLAGEPGPQRDVVLLNAAAGLEAFDLMGDPTRVQQPMARRLREKVTVAAEAVDSGRAAAKLEEWAAATRA.

Residues Gly84, 87 to 88, 95 to 98, 113 to 121, and Ala125 each bind 5-phospho-alpha-D-ribose 1-diphosphate; these read GD, NISS, and KHGNRGASS. Gly84 contributes to the anthranilate binding site. Position 97 (Ser97) interacts with Mg(2+). Asn116 contacts anthranilate. Residue Arg171 coordinates anthranilate. Mg(2+) contacts are provided by Asp229 and Lys230.

This sequence belongs to the anthranilate phosphoribosyltransferase family. In terms of assembly, homodimer. It depends on Mg(2+) as a cofactor.

It carries out the reaction N-(5-phospho-beta-D-ribosyl)anthranilate + diphosphate = 5-phospho-alpha-D-ribose 1-diphosphate + anthranilate. It functions in the pathway amino-acid biosynthesis; L-tryptophan biosynthesis; L-tryptophan from chorismate: step 2/5. Functionally, catalyzes the transfer of the phosphoribosyl group of 5-phosphorylribose-1-pyrophosphate (PRPP) to anthranilate to yield N-(5'-phosphoribosyl)-anthranilate (PRA). The polypeptide is Anthranilate phosphoribosyltransferase (Clavibacter sepedonicus (Clavibacter michiganensis subsp. sepedonicus)).